A 149-amino-acid polypeptide reads, in one-letter code: Nucleoside diphosphate kinase (149 aa).

The ATP site is built by lysine 9, phenylalanine 57, arginine 85, threonine 91, arginine 102, and asparagine 112. The active-site Pros-phosphohistidine intermediate is histidine 115.

The protein belongs to the NDK family. In terms of assembly, homotetramer. It depends on Mg(2+) as a cofactor.

The protein resides in the cytoplasm. It carries out the reaction a 2'-deoxyribonucleoside 5'-diphosphate + ATP = a 2'-deoxyribonucleoside 5'-triphosphate + ADP. The catalysed reaction is a ribonucleoside 5'-diphosphate + ATP = a ribonucleoside 5'-triphosphate + ADP. Major role in the synthesis of nucleoside triphosphates other than ATP. The ATP gamma phosphate is transferred to the NDP beta phosphate via a ping-pong mechanism, using a phosphorylated active-site intermediate. The protein is Nucleoside diphosphate kinase of Herpetosiphon aurantiacus (strain ATCC 23779 / DSM 785 / 114-95).